The sequence spans 67 residues: Protein AaeX (67 aa).

2 helical membrane passes run 3-23 (VLPVVVVFGMSFPPIFIEIIV) and 43-63 (LVWHPALFNTALYCCLFYVVS).

Belongs to the AaeX family.

It localises to the cell membrane. The sequence is that of Protein AaeX from Erwinia tasmaniensis (strain DSM 17950 / CFBP 7177 / CIP 109463 / NCPPB 4357 / Et1/99).